Here is a 318-residue protein sequence, read N- to C-terminus: Olfactory receptor 5G26 (318 aa).

Residues 1-28 lie on the Extracellular side of the membrane; it reads MMHRNQTVVTEFFFTGLTSSFHLQIVLF. The N-linked (GlcNAc...) asparagine glycan is linked to asparagine 5. The helical transmembrane segment at 29–49 threads the bilayer; that stretch reads LTFLCVYLATLLGNLGMIILI. Residues 50–56 are Cytoplasmic-facing; the sequence is HLDTRLH. Residues 57 to 77 form a helical membrane-spanning segment; it reads IPMYFFLSHLSFVDACSSSVI. Residues 78–93 lie on the Extracellular side of the membrane; the sequence is SPKMLSDMFVDKKVIS. A helical transmembrane segment spans residues 94–114; sequence FLGCAIQLCLFSQFVVTECFL. Cysteine 97 and cysteine 189 are disulfide-bonded. Residues 115-144 lie on the Cytoplasmic side of the membrane; the sequence is LASMAYDRYVAICKPLLYTLIMSQRVCVQL. The helical transmembrane segment at 145–165 threads the bilayer; the sequence is VIGPYSIGFVSTMVHIISAFV. Residues 166-198 are Extracellular-facing; it reads LPYCGPNLINHFFCDLLPVLSLACANTQMKKRL. The helical transmembrane segment at 199 to 219 threads the bilayer; it reads LFIVAGILGVFSGIIILVSYV. Residues 220-239 lie on the Cytoplasmic side of the membrane; that stretch reads YIAITILKISSADGRRKAFS. The chain crosses the membrane as a helical span at residues 240 to 260; that stretch reads TCSSHLTAVSILYGTLFFIYV. Residues 261–271 are Extracellular-facing; sequence RPSSSFSLDIN. Residues 272-292 traverse the membrane as a helical segment; the sequence is KVVSLFYTTVIPMLNPFIYSL. Residues 293–318 lie on the Cytoplasmic side of the membrane; that stretch reads RNKEVKDALIRTFEKQFCYSFQDKIL.

The protein belongs to the G-protein coupled receptor 1 family.

It is found in the cell membrane. In terms of biological role, potential odorant receptor. The protein is Olfactory receptor 5G26 of Mus musculus (Mouse).